We begin with the raw amino-acid sequence, 843 residues long: Translation initiation factor IF-2 (843 aa).

A disordered region spans residues 94–259; the sequence is QRSPEEIEAE…AHGFQSPTGP (166 aa). Residues 96–135 are compositionally biased toward basic and acidic residues; that stretch reads SPEEIEAERKREMDERRAVENAARQKAEEEAKRRAEEDAR. The segment covering 136–177 has biased composition (low complexity); it reads NQPAAGQPASAPAQPVAAAEPVREAPAPAAAAPAPASAAPSA. Basic and acidic residues-rich tracts occupy residues 178 to 219 and 227 to 236; these read DARK…EKAP and TTDEESDSFR. The span at 237–250 shows a compositional bias: basic residues; sequence RGGRGKSRLKKRNA. Residues 343 to 512 form the tr-type G domain; it reads SRAPVVTVMG…LLQAEVLELK (170 aa). The G1 stretch occupies residues 352–359; it reads GHVDHGKT. 352–359 is a GTP binding site; the sequence is GHVDHGKT. Residues 377–381 are G2; sequence GITQH. The tract at residues 398-401 is G3; sequence DTPG. GTP-binding positions include 398–402 and 452–455; these read DTPGH and NKID. The tract at residues 452–455 is G4; sequence NKID. A G5 region spans residues 488–490; it reads SAK.

This sequence belongs to the TRAFAC class translation factor GTPase superfamily. Classic translation factor GTPase family. IF-2 subfamily.

It is found in the cytoplasm. Functionally, one of the essential components for the initiation of protein synthesis. Protects formylmethionyl-tRNA from spontaneous hydrolysis and promotes its binding to the 30S ribosomal subunits. Also involved in the hydrolysis of GTP during the formation of the 70S ribosomal complex. The chain is Translation initiation factor IF-2 from Pseudomonas savastanoi pv. phaseolicola (strain 1448A / Race 6) (Pseudomonas syringae pv. phaseolicola (strain 1448A / Race 6)).